Consider the following 415-residue polypeptide: 3-oxoacyl-[acyl-carrier-protein] synthase 2 (415 aa).

One can recognise a Ketosynthase family 3 (KS3) domain in the interval 3–412 (KRRVVVTGMG…GTNGSLVFKK (410 aa)). Active-site for beta-ketoacyl synthase activity residues include C164, H304, and H342.

It belongs to the thiolase-like superfamily. Beta-ketoacyl-ACP synthases family. As to quaternary structure, homodimer.

The enzyme catalyses a fatty acyl-[ACP] + malonyl-[ACP] + H(+) = a 3-oxoacyl-[ACP] + holo-[ACP] + CO2. It catalyses the reaction (9Z)-hexadecenoyl-[ACP] + malonyl-[ACP] + H(+) = 3-oxo-(11Z)-octadecenoyl-[ACP] + holo-[ACP] + CO2. It functions in the pathway lipid metabolism; fatty acid biosynthesis. Functionally, involved in the type II fatty acid elongation cycle. Catalyzes the elongation of a wide range of acyl-ACP by the addition of two carbons from malonyl-ACP to an acyl acceptor. Can efficiently catalyze the conversion of palmitoleoyl-ACP (cis-hexadec-9-enoyl-ACP) to cis-vaccenoyl-ACP (cis-octadec-11-enoyl-ACP), an essential step in the thermal regulation of fatty acid composition. This Vibrio harveyi (Beneckea harveyi) protein is 3-oxoacyl-[acyl-carrier-protein] synthase 2 (fabF).